A 305-amino-acid chain; its full sequence is uncharacterized protein (305 aa).

Residues 53-185 form a disordered region; it reads SGRIGDGDDG…TGPRSSRTVG (133 aa). Basic and acidic residues-rich tracts occupy residues 95 to 116 and 128 to 142; these read VEER…ERPT and GSER…RSEG. Over residues 161–171 the composition is skewed to polar residues; it reads GNTQAPSQSAE. The segment at 260–302 adopts an RING-type; atypical zinc-finger fold; sequence CAICMSNFIKNQRLRVLPCDHRFHVGCVDKWLLGHSNKCPVCR.

This is an uncharacterized protein from Encephalitozoon cuniculi (strain GB-M1) (Microsporidian parasite).